Here is a 276-residue protein sequence, read N- to C-terminus: Thiazole synthase (276 aa).

The active-site Schiff-base intermediate with DXP is the K112. Residues G173, A199–G200, and N221–T222 contribute to the 1-deoxy-D-xylulose 5-phosphate site.

The protein belongs to the ThiG family. As to quaternary structure, homotetramer. Forms heterodimers with either ThiH or ThiS.

It is found in the cytoplasm. The catalysed reaction is [ThiS sulfur-carrier protein]-C-terminal-Gly-aminoethanethioate + 2-iminoacetate + 1-deoxy-D-xylulose 5-phosphate = [ThiS sulfur-carrier protein]-C-terminal Gly-Gly + 2-[(2R,5Z)-2-carboxy-4-methylthiazol-5(2H)-ylidene]ethyl phosphate + 2 H2O + H(+). Its pathway is cofactor biosynthesis; thiamine diphosphate biosynthesis. In terms of biological role, catalyzes the rearrangement of 1-deoxy-D-xylulose 5-phosphate (DXP) to produce the thiazole phosphate moiety of thiamine. Sulfur is provided by the thiocarboxylate moiety of the carrier protein ThiS. In vitro, sulfur can be provided by H(2)S. The protein is Thiazole synthase of Synechococcus sp. (strain ATCC 27144 / PCC 6301 / SAUG 1402/1) (Anacystis nidulans).